The following is a 156-amino-acid chain: Small ribosomal subunit protein uS7 (156 aa).

Belongs to the universal ribosomal protein uS7 family. As to quaternary structure, part of the 30S ribosomal subunit. Contacts proteins S9 and S11.

Functionally, one of the primary rRNA binding proteins, it binds directly to 16S rRNA where it nucleates assembly of the head domain of the 30S subunit. Is located at the subunit interface close to the decoding center, probably blocks exit of the E-site tRNA. The chain is Small ribosomal subunit protein uS7 from Mycoplasmopsis synoviae (strain 53) (Mycoplasma synoviae).